Reading from the N-terminus, the 359-residue chain is Nicotinate-nucleotide--dimethylbenzimidazole phosphoribosyltransferase (359 aa).

The Proton acceptor role is filled by E318.

This sequence belongs to the CobT family. In terms of assembly, homodimer.

The enzyme catalyses 5,6-dimethylbenzimidazole + nicotinate beta-D-ribonucleotide = alpha-ribazole 5'-phosphate + nicotinate + H(+). Its pathway is nucleoside biosynthesis; alpha-ribazole biosynthesis; alpha-ribazole from 5,6-dimethylbenzimidazole: step 1/2. Functionally, catalyzes the synthesis of alpha-ribazole-5'-phosphate from nicotinate mononucleotide (NAMN) and 5,6-dimethylbenzimidazole (DMB). This is Nicotinate-nucleotide--dimethylbenzimidazole phosphoribosyltransferase from Escherichia coli O127:H6 (strain E2348/69 / EPEC).